The primary structure comprises 201 residues: U1 small nuclear ribonucleoprotein C (201 aa).

The Matrin-type zinc-finger motif lies at Tyr-4–Glu-36. Over residues Ile-137–Lys-154 the composition is skewed to low complexity. Residues Ile-137–Asp-176 are disordered.

This sequence belongs to the U1 small nuclear ribonucleoprotein C family. U1 snRNP is composed of the 7 core Sm proteins B/B', D1, D2, D3, E, F and G that assemble in a heptameric protein ring on the Sm site of the small nuclear RNA to form the core snRNP, and at least 3 U1 snRNP-specific proteins U1-70K, U1-A and U1-C. U1-C interacts with U1 snRNA and the 5' splice-site region of the pre-mRNA.

It localises to the nucleus. Functionally, component of the spliceosomal U1 snRNP, which is essential for recognition of the pre-mRNA 5' splice-site and the subsequent assembly of the spliceosome. U1-C is directly involved in initial 5' splice-site recognition for both constitutive and regulated alternative splicing. The interaction with the 5' splice-site seems to precede base-pairing between the pre-mRNA and the U1 snRNA. Stimulates commitment or early (E) complex formation by stabilizing the base pairing of the 5' end of the U1 snRNA and the 5' splice-site region. The polypeptide is U1 small nuclear ribonucleoprotein C (Plasmodium yoelii yoelii).